A 105-amino-acid chain; its full sequence is Integration host factor subunit beta (105 aa).

This sequence belongs to the bacterial histone-like protein family. As to quaternary structure, heterodimer of an alpha and a beta chain.

Functionally, this protein is one of the two subunits of integration host factor, a specific DNA-binding protein that functions in genetic recombination as well as in transcriptional and translational control. This Bradyrhizobium sp. (strain ORS 278) protein is Integration host factor subunit beta.